We begin with the raw amino-acid sequence, 446 residues long: MAAQLNELWQKTINIIKGELTEVSFNTWIKSITPISIDKDSIRLSVPNQFTKEILENRYKDLIINSMKIITTKKYDIAFLISSEEALETDEDQETDTNNVNTDTSSSMLNPKYKFDSFVIGNSNRFAHAACLAVAEAPAKAYNPLFIYGGVGLGKTHLMQAIGHYILDNNPKAKVVYVSSEKFTNELINSIKDDKNVEFRNKYRNVDVLLIDDVQFIAGKERTQEEFFHTFNALHENNKQIILSSDRPPKEIPTLEDRLRSRFEWGLIADIQAPDFETRIAILKKKADVEHLNIPNDVMVYIATQIKSNIRELEGALIRIVAFSSLTNKEISVDLASEALKDIISSKQNKQITIDLIQDVVSSYFNLRIEDFKSARRTKNIAFPRQIAMYLSRKLTDMSLPKIGEAFGGRDHTTVIHAYEKISSALKEDDDLKYTINEITKRFSPK.

Positions 1-73 are domain I, interacts with DnaA modulators; sequence MAAQLNELWQ…INSMKIITTK (73 aa). The segment at 73–107 is domain II; the sequence is KKYDIAFLISSEEALETDEDQETDTNNVNTDTSSS. Positions 108–324 are domain III, AAA+ region; it reads MLNPKYKFDS…GALIRIVAFS (217 aa). Residues Gly152, Gly154, Lys155, and Thr156 each coordinate ATP. Residues 325 to 446 are domain IV, binds dsDNA; that stretch reads SLTNKEISVD…NEITKRFSPK (122 aa).

The protein belongs to the DnaA family. As to quaternary structure, oligomerizes as a right-handed, spiral filament on DNA at oriC.

It localises to the cytoplasm. Plays an essential role in the initiation and regulation of chromosomal replication. ATP-DnaA binds to the origin of replication (oriC) to initiate formation of the DNA replication initiation complex once per cell cycle. Binds the DnaA box (a 9 base pair repeat at the origin) and separates the double-stranded (ds)DNA. Forms a right-handed helical filament on oriC DNA; dsDNA binds to the exterior of the filament while single-stranded (ss)DNA is stabiized in the filament's interior. The ATP-DnaA-oriC complex binds and stabilizes one strand of the AT-rich DNA unwinding element (DUE), permitting loading of DNA polymerase. After initiation quickly degrades to an ADP-DnaA complex that is not apt for DNA replication. Binds acidic phospholipids. This Clostridium acetobutylicum (strain ATCC 824 / DSM 792 / JCM 1419 / IAM 19013 / LMG 5710 / NBRC 13948 / NRRL B-527 / VKM B-1787 / 2291 / W) protein is Chromosomal replication initiator protein DnaA.